The chain runs to 113 residues: Major basic nuclear protein 1 (113 aa).

The disordered stretch occupies residues 1 to 20 (MAPKMKAAMKAMKAPAMKGK).

It is found in the nucleus. The chain is Major basic nuclear protein 1 (HCc1) from Crypthecodinium cohnii (Dinoflagellate).